A 428-amino-acid polypeptide reads, in one-letter code: Enolase (428 aa).

Position 164 (Q164) interacts with (2R)-2-phosphoglycerate. E206 serves as the catalytic Proton donor. Residues D243, E286, and D313 each coordinate Mg(2+). Residues K338, R367, S368, and K389 each contribute to the (2R)-2-phosphoglycerate site. The active-site Proton acceptor is the K338.

It belongs to the enolase family. Mg(2+) serves as cofactor.

The protein resides in the cytoplasm. It localises to the secreted. It is found in the cell surface. It catalyses the reaction (2R)-2-phosphoglycerate = phosphoenolpyruvate + H2O. It participates in carbohydrate degradation; glycolysis; pyruvate from D-glyceraldehyde 3-phosphate: step 4/5. In terms of biological role, catalyzes the reversible conversion of 2-phosphoglycerate (2-PG) into phosphoenolpyruvate (PEP). It is essential for the degradation of carbohydrates via glycolysis. In Dehalococcoides mccartyi (strain ATCC BAA-2266 / KCTC 15142 / 195) (Dehalococcoides ethenogenes (strain 195)), this protein is Enolase.